The sequence spans 82 residues: Small ribosomal subunit protein bS18 (82 aa).

The protein belongs to the bacterial ribosomal protein bS18 family. Part of the 30S ribosomal subunit. Forms a tight heterodimer with protein bS6.

Binds as a heterodimer with protein bS6 to the central domain of the 16S rRNA, where it helps stabilize the platform of the 30S subunit. In Rhizobium meliloti (strain 1021) (Ensifer meliloti), this protein is Small ribosomal subunit protein bS18.